The chain runs to 337 residues: Mitochondrial amidoxime-reducing component 1 (337 aa).

Gly2 carries N-myristoyl glycine lipidation. The Mitochondrial matrix portion of the chain corresponds to 2-20 (GAAGSSALARFVLLAQSRP). The helical; Signal-anchor for type II membrane protein transmembrane segment at 21-40 (GWLGVAALGLTAVALGAVAW) threads the bilayer. Residues 41-337 (RRAWPTRRRR…VGDPVYLLGQ (297 aa)) are Cytoplasmic-facing. Lys67, Ser68, and Arg92 together coordinate Mo-molybdopterin. Residues 93-183 (FWLVINQEGN…KSQPYRLVHF (91 aa)) form an MOSC N-terminal region region. In terms of domain architecture, MOSC spans 187–335 (MRPRRPHQIA…IKVGDPVYLL (149 aa)). 8 residues coordinate Mo-molybdopterin: Thr210, Ser211, Arg238, Asn240, Ser271, Arg272, Cys273, and Tyr317.

As to quaternary structure, component of a complex composed of cytochrome b5, NADH-cytochrome b5 reductase and MTARC1. It depends on Mo-molybdopterin as a cofactor.

The protein localises to the mitochondrion outer membrane. The protein resides in the membrane. The catalysed reaction is N(omega)-hydroxy-L-arginine + 2 Fe(II)-[cytochrome b5] + 2 H(+) = L-arginine + 2 Fe(III)-[cytochrome b5] + H2O. Catalyzes the reduction of N-oxygenated molecules, acting as a counterpart of cytochrome P450 and flavin-containing monooxygenases in metabolic cycles. As a component of prodrug-converting system, reduces a multitude of N-hydroxylated prodrugs particularly amidoximes, leading to increased drug bioavailability. May be involved in mitochondrial N(omega)-hydroxy-L-arginine (NOHA) reduction, regulating endogenous nitric oxide levels and biosynthesis. Postulated to cleave the N-OH bond of N-hydroxylated substrates in concert with electron transfer from NADH to cytochrome b5 reductase then to cytochrome b5, the ultimate electron donor that primes the active site for substrate reduction. This chain is Mitochondrial amidoxime-reducing component 1, found in Homo sapiens (Human).